The following is a 535-amino-acid chain: CTP synthase (535 aa).

An amidoligase domain region spans residues 1-266; it reads MKTKFIFITG…DERVVEKLNI (266 aa). CTP is bound at residue Ser14. UTP is bound at residue Ser14. Residues 15-20 and Asp72 each bind ATP; that span reads SIGKGL. Mg(2+) contacts are provided by Asp72 and Glu140. Residues 147–149, 187–192, and Lys223 each bind CTP; these read DIE and KTKPTQ. Residues 187–192 and Lys223 contribute to the UTP site; that span reads KTKPTQ. The 243-residue stretch at 292 to 534 folds into the Glutamine amidotransferase type-1 domain; it reads RIAIVGKYVN…VRAALIQRDA (243 aa). Position 354 (Gly354) interacts with L-glutamine. Cys381 (nucleophile; for glutamine hydrolysis) is an active-site residue. Residues 382-385, Glu405, and Arg462 contribute to the L-glutamine site; that span reads LGMQ. Catalysis depends on residues His507 and Glu509.

Belongs to the CTP synthase family. In terms of assembly, homotetramer.

It catalyses the reaction UTP + L-glutamine + ATP + H2O = CTP + L-glutamate + ADP + phosphate + 2 H(+). The catalysed reaction is L-glutamine + H2O = L-glutamate + NH4(+). It carries out the reaction UTP + NH4(+) + ATP = CTP + ADP + phosphate + 2 H(+). The protein operates within pyrimidine metabolism; CTP biosynthesis via de novo pathway; CTP from UDP: step 2/2. Its activity is regulated as follows. Allosterically activated by GTP, when glutamine is the substrate; GTP has no effect on the reaction when ammonia is the substrate. The allosteric effector GTP functions by stabilizing the protein conformation that binds the tetrahedral intermediate(s) formed during glutamine hydrolysis. Inhibited by the product CTP, via allosteric rather than competitive inhibition. Its function is as follows. Catalyzes the ATP-dependent amination of UTP to CTP with either L-glutamine or ammonia as the source of nitrogen. Regulates intracellular CTP levels through interactions with the four ribonucleotide triphosphates. This is CTP synthase from Pelobacter propionicus (strain DSM 2379 / NBRC 103807 / OttBd1).